The chain runs to 309 residues: tRNA dimethylallyltransferase (309 aa).

An ATP-binding site is contributed by Gly14–Ser21. Thr16–Ser21 serves as a coordination point for substrate. An interaction with substrate tRNA region spans residues Asp39–Gln42.

This sequence belongs to the IPP transferase family. As to quaternary structure, monomer. The cofactor is Mg(2+).

It carries out the reaction adenosine(37) in tRNA + dimethylallyl diphosphate = N(6)-dimethylallyladenosine(37) in tRNA + diphosphate. In terms of biological role, catalyzes the transfer of a dimethylallyl group onto the adenine at position 37 in tRNAs that read codons beginning with uridine, leading to the formation of N6-(dimethylallyl)adenosine (i(6)A). The sequence is that of tRNA dimethylallyltransferase from Geobacter metallireducens (strain ATCC 53774 / DSM 7210 / GS-15).